The primary structure comprises 212 residues: MIAVINYGAGNLPNVVRALQRVGATLTVTDNPEVIRSAQAVVLPGVGATADTMASLRHLGIAEVLPAVIAASTPFLGICVGMQVLLSESEEFGLHSCLDIIPGTVRRLPEHAGKIPQIGWNQLQISPTFRNHPLFADIPDGADVYFVHSYYCAVADEAIIAARTDYGIPFPSVIIRDHLAAVQFHPEKSGDYGLRLLANFVRWSEAVQPKGV.

The region spanning 1-210 is the Glutamine amidotransferase type-1 domain; sequence MIAVINYGAG…VRWSEAVQPK (210 aa). The Nucleophile role is filled by Cys79. Catalysis depends on residues His185 and Glu187.

In terms of assembly, heterodimer of HisH and HisF.

It localises to the cytoplasm. The enzyme catalyses 5-[(5-phospho-1-deoxy-D-ribulos-1-ylimino)methylamino]-1-(5-phospho-beta-D-ribosyl)imidazole-4-carboxamide + L-glutamine = D-erythro-1-(imidazol-4-yl)glycerol 3-phosphate + 5-amino-1-(5-phospho-beta-D-ribosyl)imidazole-4-carboxamide + L-glutamate + H(+). The catalysed reaction is L-glutamine + H2O = L-glutamate + NH4(+). It participates in amino-acid biosynthesis; L-histidine biosynthesis; L-histidine from 5-phospho-alpha-D-ribose 1-diphosphate: step 5/9. IGPS catalyzes the conversion of PRFAR and glutamine to IGP, AICAR and glutamate. The HisH subunit catalyzes the hydrolysis of glutamine to glutamate and ammonia as part of the synthesis of IGP and AICAR. The resulting ammonia molecule is channeled to the active site of HisF. This is Imidazole glycerol phosphate synthase subunit HisH from Chloroflexus aurantiacus (strain ATCC 29364 / DSM 637 / Y-400-fl).